We begin with the raw amino-acid sequence, 36 residues long: Kappa-theraphotoxin-Pg1a (36 aa).

Intrachain disulfides connect cysteine 4/cysteine 19, cysteine 11/cysteine 24, and cysteine 18/cysteine 31.

It belongs to the neurotoxin 10 (Hwtx-1) family. 44 (Jztx-4) subfamily. As to expression, expressed by the venom gland.

The protein localises to the secreted. Its function is as follows. Gating modifier of Kv2.1/KCNB1 (IC(50)=5.1 nM), Kv2.2/KCNB2 and Kv4.3/KCND3 channels (IC(50)=39 nM). Acts by shifting the channel activation to more depolarized potentials by stabilizing the resting conformation of the voltage sensor. It completely inhibits opening of the Kv2.1/KCNB1 channel at negative membrane voltages and dramatically shifts channel activation to positive voltages. May act by partitioning into lipid membranes and then by binding the voltage sensor paddle of the channel from a place within the membrane. The polypeptide is Kappa-theraphotoxin-Pg1a (Chilobrachys guangxiensis (Chinese earth tiger tarantula)).